A 302-amino-acid chain; its full sequence is Cyclin-C (302 aa).

The Cyclin N-terminal domain maps to Asn46–Glu152. A disordered region spans residues Leu281 to Leu302. Low complexity predominate over residues Gln292–Leu302.

This sequence belongs to the cyclin family. Cyclin C subfamily. As to quaternary structure, component of the Mediator complex.

It is found in the nucleus. In terms of biological role, component of the Mediator complex, a coactivator involved in regulated gene transcription of nearly all RNA polymerase II-dependent genes. Mediator functions as a bridge to convey information from gene-specific regulatory proteins to the basal RNA polymerase II transcription machinery. Mediator is recruited to promoters by direct interactions with regulatory proteins and serves as a scaffold for the assembly of a functional preinitiation complex with RNA polymerase II and the general transcription factors. Binds to and activates cyclin-dependent kinase cdk-8 that phosphorylates the CTD (C-terminal domain) of the large subunit of RNA polymerase II (RNAp II), which may inhibit the formation of a transcription initiation complex. The chain is Cyclin-C (cic-1) from Caenorhabditis elegans.